The following is a 203-amino-acid chain: MGHEAKHPIIIGITGNIGSGKSTVAALLRSWGYPVLDLDALAARARENKEEELKRLFPEAVVGGRLDRRALARLVFSDPERLKALEAVVHPEVRRLLMEELSRLEAPLVFLEIPLLFEKGWEGRLHGTLLVAAPLEERVRRVMARSGLSREEVLARERAQMPEEEKRKRATWVLENTGSLEDLERALKAVLAELTGGAKGGRG.

Residues 10-203 (IIGITGNIGS…LTGGAKGGRG (194 aa)) form the DPCK domain. 18–23 (GSGKST) lines the ATP pocket.

It belongs to the CoaE family.

It is found in the cytoplasm. It carries out the reaction 3'-dephospho-CoA + ATP = ADP + CoA + H(+). It functions in the pathway cofactor biosynthesis; coenzyme A biosynthesis; CoA from (R)-pantothenate: step 5/5. Catalyzes the phosphorylation of the 3'-hydroxyl group of dephosphocoenzyme A to form coenzyme A. This Thermus thermophilus (strain ATCC BAA-163 / DSM 7039 / HB27) protein is Dephospho-CoA kinase.